Reading from the N-terminus, the 588-residue chain is L-fucose isomerase (588 aa).

Catalysis depends on proton acceptor residues Glu335 and Asp359. Positions 335, 359, and 525 each coordinate Mn(2+).

Belongs to the L-fucose isomerase family. Mn(2+) is required as a cofactor.

Its subcellular location is the cytoplasm. The enzyme catalyses L-fucose = L-fuculose. Its pathway is carbohydrate degradation; L-fucose degradation; L-lactaldehyde and glycerone phosphate from L-fucose: step 1/3. Converts the aldose L-fucose into the corresponding ketose L-fuculose. In Streptococcus pneumoniae serotype 2 (strain D39 / NCTC 7466), this protein is L-fucose isomerase.